A 62-amino-acid chain; its full sequence is Probable tautomerase SH1546 (62 aa).

Pro2 functions as the Proton acceptor; via imino nitrogen in the catalytic mechanism.

This sequence belongs to the 4-oxalocrotonate tautomerase family.

This is Probable tautomerase SH1546 from Staphylococcus haemolyticus (strain JCSC1435).